The following is a 323-amino-acid chain: tRNA U34 carboxymethyltransferase (323 aa).

Residues Lys-91, Trp-105, Lys-110, Gly-130, 180-181, Met-196, Tyr-200, and Arg-315 contribute to the carboxy-S-adenosyl-L-methionine site; that span reads VE.

This sequence belongs to the class I-like SAM-binding methyltransferase superfamily. CmoB family. In terms of assembly, homotetramer.

The catalysed reaction is carboxy-S-adenosyl-L-methionine + 5-hydroxyuridine(34) in tRNA = 5-carboxymethoxyuridine(34) in tRNA + S-adenosyl-L-homocysteine + H(+). In terms of biological role, catalyzes carboxymethyl transfer from carboxy-S-adenosyl-L-methionine (Cx-SAM) to 5-hydroxyuridine (ho5U) to form 5-carboxymethoxyuridine (cmo5U) at position 34 in tRNAs. This Trichlorobacter lovleyi (strain ATCC BAA-1151 / DSM 17278 / SZ) (Geobacter lovleyi) protein is tRNA U34 carboxymethyltransferase.